Reading from the N-terminus, the 325-residue chain is NADH-quinone oxidoreductase subunit H (325 aa).

A run of 8 helical transmembrane segments spans residues 11-31 (ILLTILKAVVILLVVVTCGAF), 81-101 (VIFTLAPMIAFTSLLLAFAIV), 114-134 (IGILFFLMMAGLAVYAVLFAG), 154-174 (LSYEVFLGLSLMGVVAQAGSF), 186-206 (VWNVIPQFFGFITFAIAGVAV), 237-257 (FFVGEYIGIVTISALMVTLFF), 265-285 (LPPFIWFALKTAFFMMMFILI), and 304-324 (ICLPLTLINLLVTAAVILWQA).

Belongs to the complex I subunit 1 family. In terms of assembly, NDH-1 is composed of 13 different subunits. Subunits NuoA, H, J, K, L, M, N constitute the membrane sector of the complex.

It is found in the cell inner membrane. The catalysed reaction is a quinone + NADH + 5 H(+)(in) = a quinol + NAD(+) + 4 H(+)(out). In terms of biological role, NDH-1 shuttles electrons from NADH, via FMN and iron-sulfur (Fe-S) centers, to quinones in the respiratory chain. The immediate electron acceptor for the enzyme in this species is believed to be ubiquinone. Couples the redox reaction to proton translocation (for every two electrons transferred, four hydrogen ions are translocated across the cytoplasmic membrane), and thus conserves the redox energy in a proton gradient. This subunit may bind ubiquinone. The protein is NADH-quinone oxidoreductase subunit H of Escherichia coli O7:K1 (strain IAI39 / ExPEC).